Consider the following 373-residue polypeptide: Alanine racemase (373 aa).

The Proton acceptor; specific for D-alanine role is filled by K40. The residue at position 40 (K40) is an N6-(pyridoxal phosphate)lysine. Residue R140 participates in substrate binding. Y268 functions as the Proton acceptor; specific for L-alanine in the catalytic mechanism. M315 is a binding site for substrate.

Belongs to the alanine racemase family. It depends on pyridoxal 5'-phosphate as a cofactor.

The catalysed reaction is L-alanine = D-alanine. The protein operates within amino-acid biosynthesis; D-alanine biosynthesis; D-alanine from L-alanine: step 1/1. In terms of biological role, catalyzes the interconversion of L-alanine and D-alanine. May also act on other amino acids. In Limosilactobacillus fermentum (strain NBRC 3956 / LMG 18251) (Lactobacillus fermentum), this protein is Alanine racemase (alr).